A 204-amino-acid polypeptide reads, in one-letter code: Putative glutathione S-transferase alpha-3 (204 aa).

T2 is subject to N-acetylthreonine. The 78-residue stretch at 2–79 folds into the GST N-terminal domain; sequence TKPQLSYFKV…YIASQHDFVG (78 aa). Glutathione is bound by residues Y8, 49-50, and 63-64; these read QL and QS. A GST C-terminal domain is found at 81–202; it reads TPEEKALVDE…YLKNRPITER (122 aa).

Belongs to the GST superfamily. Alpha family.

The enzyme catalyses RX + glutathione = an S-substituted glutathione + a halide anion + H(+). Functionally, conjugation of reduced glutathione to a wide number of exogenous and endogenous hydrophobic electrophiles. This Dictyostelium discoideum (Social amoeba) protein is Putative glutathione S-transferase alpha-3 (gsta3).